A 261-amino-acid polypeptide reads, in one-letter code: tRNA pseudouridine synthase A (261 aa).

The active-site Nucleophile is the D51. Y109 is a binding site for substrate.

This sequence belongs to the tRNA pseudouridine synthase TruA family. In terms of assembly, homodimer.

It catalyses the reaction uridine(38/39/40) in tRNA = pseudouridine(38/39/40) in tRNA. Its function is as follows. Formation of pseudouridine at positions 38, 39 and 40 in the anticodon stem and loop of transfer RNAs. The sequence is that of tRNA pseudouridine synthase A from Methylobacillus flagellatus (strain ATCC 51484 / DSM 6875 / VKM B-1610 / KT).